Here is a 259-residue protein sequence, read N- to C-terminus: MRIDVISLFPEFIAQCAAFGVVGRAQERGLLELQGWNPREHAQGNYRRVDDRPFGGGPGMVMLIEPLRACLDAVQAADARPAPVIYFSPQGRRLTQMLARELAQLPRMVLLCGRYEGVDERFLAQAVDMEISIGDYVLSGGELGAAVVVDVVTRLQEGVLNDAESAAQDSFEGPQGLLDCPHYSHPSSHAWGDVPEVLRSGNHAAIARWRRQQSLGRTWLRRPDLLDEAGLDKHDRRLLEEFRRELAKGDEESGCTPSP.

S-adenosyl-L-methionine is bound by residues Gly113 and 133 to 138; that span reads IGDYVL.

The protein belongs to the RNA methyltransferase TrmD family. As to quaternary structure, homodimer.

It is found in the cytoplasm. It carries out the reaction guanosine(37) in tRNA + S-adenosyl-L-methionine = N(1)-methylguanosine(37) in tRNA + S-adenosyl-L-homocysteine + H(+). In terms of biological role, specifically methylates guanosine-37 in various tRNAs. In Xanthomonas oryzae pv. oryzae (strain MAFF 311018), this protein is tRNA (guanine-N(1)-)-methyltransferase.